Consider the following 418-residue polypeptide: AP-3 complex subunit mu-2 (418 aa).

The MHD domain occupies 176 to 417; it reads NNEAYFDVVE…MTKAGKFQVR (242 aa).

Belongs to the adaptor complexes medium subunit family. In terms of assembly, adaptor protein complex 3 (AP-3) is a heterotetramer composed of two large adaptins (delta-type subunit AP3D1 and beta-type subunit AP3B1 or AP3B2), a medium adaptin (mu-type subunit AP3M1 or AP3M2) and a small adaptin (sigma-type subunit APS1 or AP3S2). AP-3 associates with the BLOC-1 complex.

Its subcellular location is the golgi apparatus. The protein localises to the cytoplasmic vesicle membrane. Functionally, component of the adaptor complexes which link clathrin to receptors in coated vesicles. Clathrin-associated protein complexes are believed to interact with the cytoplasmic tails of membrane proteins, leading to their selection and concentration. Ap47 is a subunit of the plasma membrane adaptor. In concert with the BLOC-1 complex, AP-3 is required to target cargos into vesicles assembled at cell bodies for delivery into neurites and nerve terminals. The polypeptide is AP-3 complex subunit mu-2 (Ap3m2) (Rattus norvegicus (Rat)).